The sequence spans 475 residues: Gustatory and pheromone receptor 33a (475 aa).

Topologically, residues 1-34 (MIQIMNWFSMVIGLIPLNRQQSETNFILDYAMMC) are cytoplasmic. Residues 35-55 (IVPIFYVACYLLINLSHIIGL) traverse the membrane as a helical segment. Topologically, residues 56 to 68 (CLLDSCNSVCKLS) are extracellular. The chain crosses the membrane as a helical span at residues 69–89 (SHLFMHLGAFLYLTITLLSLY). Residues 90 to 128 (RRKEFFQQFDARLNDIDAVIQKCQRVAEMDKVKVTAVKH) lie on the Cytoplasmic side of the membrane. A helical membrane pass occupies residues 129-149 (SVAYHFTWLFLFCVFTFALYY). Residues 150–158 (DVRSLYLTF) are Extracellular-facing. A helical transmembrane segment spans residues 159–179 (GNLAFIPFMVSSFPYLAGSII). Residues 180–319 (QGEFIYHVSV…LALSVITNGE (140 aa)) are Cytoplasmic-facing. Residues 243 to 281 (TGFGNENKFAGEMKRQEGQQKNDDDDLDTSNDEDEDDFD) are disordered. The span at 251 to 264 (FAGEMKRQEGQQKN) shows a compositional bias: basic and acidic residues. A compositionally biased stretch (acidic residues) spans 265-281 (DDDDLDTSNDEDEDDFD). Residues 320–340 (FGPQCVPYMAACFVVSIFGIF) traverse the membrane as a helical segment. Residues 341 to 357 (LETKVNFIVGGKSRLLD) lie on the Extracellular side of the membrane. A helical transmembrane segment spans residues 358–378 (YMTYLYVIWSFTTMMVAYIVL). The Cytoplasmic portion of the chain corresponds to 379 to 441 (RLCCNANNHS…FNGVGLFALD (63 aa)). A helical transmembrane segment spans residues 442-462 (YTFIFSTVSAATSYLIVLLQF). The Extracellular segment spans residues 463–475 (DMTAILRNEGLMS).

Belongs to the insect chemoreceptor superfamily. Gustatory receptor (GR) family. Gr66a subfamily. Expressed widely in gustatory receptor neurons (GRNs) that respond to aversive chemicals. In larvae, is expressed in neurons of the terminal external chemosensory organ, and the dorsal, ventral and posterior external chemosensory organs.

The protein localises to the cell membrane. Its function is as follows. Gustatory receptor which mediates acceptance or avoidance behavior, depending on its substrates. Required for sensing all nonvolatile repulsive chemicals, including tastants, pheromones, and especially N,N-Diethyl-meta-toluamide (DEET), the most widely used insect repellent worldwide. Also functions as a pheromone receptor for a male inhibitory pheromone leading to male-male courtship suppression. This chain is Gustatory and pheromone receptor 33a (Gr33a), found in Drosophila melanogaster (Fruit fly).